The following is a 366-amino-acid chain: UDP-N-acetylglucosamine--N-acetylmuramyl-(pentapeptide) pyrophosphoryl-undecaprenol N-acetylglucosamine transferase (366 aa).

UDP-N-acetyl-alpha-D-glucosamine is bound by residues 10–12 (TGG), N124, R165, S192, I247, and Q292.

It belongs to the glycosyltransferase 28 family. MurG subfamily.

Its subcellular location is the cell inner membrane. It carries out the reaction di-trans,octa-cis-undecaprenyl diphospho-N-acetyl-alpha-D-muramoyl-L-alanyl-D-glutamyl-meso-2,6-diaminopimeloyl-D-alanyl-D-alanine + UDP-N-acetyl-alpha-D-glucosamine = di-trans,octa-cis-undecaprenyl diphospho-[N-acetyl-alpha-D-glucosaminyl-(1-&gt;4)]-N-acetyl-alpha-D-muramoyl-L-alanyl-D-glutamyl-meso-2,6-diaminopimeloyl-D-alanyl-D-alanine + UDP + H(+). The protein operates within cell wall biogenesis; peptidoglycan biosynthesis. Functionally, cell wall formation. Catalyzes the transfer of a GlcNAc subunit on undecaprenyl-pyrophosphoryl-MurNAc-pentapeptide (lipid intermediate I) to form undecaprenyl-pyrophosphoryl-MurNAc-(pentapeptide)GlcNAc (lipid intermediate II). The protein is UDP-N-acetylglucosamine--N-acetylmuramyl-(pentapeptide) pyrophosphoryl-undecaprenol N-acetylglucosamine transferase of Geotalea daltonii (strain DSM 22248 / JCM 15807 / FRC-32) (Geobacter daltonii).